Here is a 446-residue protein sequence, read N- to C-terminus: NADP-specific glutamate dehydrogenase (446 aa).

Residues K92, Q113, and K116 each contribute to the substrate site. K128 functions as the Proton donor in the catalytic mechanism. G167 serves as a coordination point for substrate. 2 residues coordinate NADP(+): T211 and N242. S379 contacts substrate.

The protein belongs to the Glu/Leu/Phe/Val dehydrogenases family. As to quaternary structure, homohexamer.

It catalyses the reaction L-glutamate + NADP(+) + H2O = 2-oxoglutarate + NH4(+) + NADPH + H(+). In terms of biological role, catalyzes the reversible oxidative deamination of glutamate to a-ketoglutarate and ammonia. In Unknown prokaryotic organism, this protein is NADP-specific glutamate dehydrogenase (gdhA).